We begin with the raw amino-acid sequence, 895 residues long: Cellulose 1,4-beta-cellobiosidase (895 aa).

A signal peptide spans 1–27 (MNFRRMLCAAIVLTIVLSIMLPSTVFA). One can recognise a CBM-cenC domain in the interval 40-199 (NDLLYERTFD…YLDDVSLYDP (160 aa)). The linker stretch occupies residues 199–240 (PRFVKPVEYVLPQPDVRVNQVGYLPFAKKYATVVSSSTSPLK). Positions 241 to 815 (WQLLNSANQV…WVTAYLDEID (575 aa)) are catalytic. Residue Asp386 is the Nucleophile of the active site. Catalysis depends on residues His737, Asp786, and Glu795. Residues 828-894 (PEVIYGDCNG…ILKEIDVLPH (67 aa)) enclose the Dockerin domain.

The protein belongs to the glycosyl hydrolase 9 (cellulase E) family.

It localises to the secreted. It catalyses the reaction Hydrolysis of (1-&gt;4)-beta-D-glucosidic linkages in cellulose and cellotetraose, releasing cellobiose from the non-reducing ends of the chains.. With respect to regulation, inhibited by cellobiose. The sequence is that of Cellulose 1,4-beta-cellobiosidase (celK) from Acetivibrio thermocellus (Hungateiclostridium thermocellum).